Consider the following 346-residue polypeptide: Dihydroorotase (346 aa).

Positions 13 and 15 each coordinate Zn(2+). Substrate-binding positions include 15 to 17 (HLR) and Asn41. Lys99, His136, and His174 together coordinate Zn(2+). The residue at position 99 (Lys99) is an N6-carboxylysine. Position 136 (His136) interacts with substrate. Substrate is bound at residue Leu219. A Zn(2+)-binding site is contributed by Asp247. Residue Asp247 is part of the active site. Residues His251 and Ala263 each contribute to the substrate site.

The protein belongs to the metallo-dependent hydrolases superfamily. DHOase family. Class II DHOase subfamily. In terms of assembly, homodimer. Zn(2+) serves as cofactor.

It catalyses the reaction (S)-dihydroorotate + H2O = N-carbamoyl-L-aspartate + H(+). It participates in pyrimidine metabolism; UMP biosynthesis via de novo pathway; (S)-dihydroorotate from bicarbonate: step 3/3. Catalyzes the reversible cyclization of carbamoyl aspartate to dihydroorotate. The polypeptide is Dihydroorotase (Rhizobium rhizogenes (strain K84 / ATCC BAA-868) (Agrobacterium radiobacter)).